We begin with the raw amino-acid sequence, 110 residues long: Cysteine-rich and transmembrane domain-containing protein 1 (110 aa).

Residues 1–18 are compositionally biased toward pro residues; it reads MNYENPPPYASPPAPYPP. Residues 1 to 45 form a disordered region; the sequence is MNYENPPPYASPPAPYPPYGQQQPSYPVPNQYPGNPPGPVGYQPA. Low complexity predominate over residues 19–29; that stretch reads YGQQQPSYPVP. Residues 87 to 104 form a helical membrane-spanning segment; sequence SGESACLTACWTALCCCC.

Belongs to the CYSTM1 family.

The protein resides in the membrane. The chain is Cysteine-rich and transmembrane domain-containing protein 1 (cystm1) from Xenopus tropicalis (Western clawed frog).